The primary structure comprises 321 residues: tRNA-dihydrouridine synthase B (321 aa).

FMN is bound by residues 16–18 (PMA) and glutamine 70. Cysteine 100 (proton donor) is an active-site residue. FMN is bound by residues lysine 139, 200 to 202 (NGD), and 224 to 225 (GR).

It belongs to the Dus family. DusB subfamily. FMN serves as cofactor.

It catalyses the reaction a 5,6-dihydrouridine in tRNA + NAD(+) = a uridine in tRNA + NADH + H(+). It carries out the reaction a 5,6-dihydrouridine in tRNA + NADP(+) = a uridine in tRNA + NADPH + H(+). Its function is as follows. Catalyzes the synthesis of 5,6-dihydrouridine (D), a modified base found in the D-loop of most tRNAs, via the reduction of the C5-C6 double bond in target uridines. The protein is tRNA-dihydrouridine synthase B of Pectobacterium carotovorum (Erwinia carotovora).